The primary structure comprises 371 residues: MPPKQQPKADLAKKQKQVEDKTFGLKNKNKSKNVQKYVQSLKQSVQPKPDATKAAAKKKKEEEKAREQELNELFKVAISQPKVPVGVDPKSILCEFFKAGQCQKGFKCKFSHDLNIQRKGEKIDIYSDTRDEDGDMDEWDQETLEKVVESKKNEYNQNKPTDIVCKYFLDAVEKKQYGWFWSCPNGGKECHYRHALPPGYVLKSQMKALLEEESSKKLAVEDEIENERAKLQTATQMTPALFMEWKRKKIAERDAGLAASQAERAKNDRMSGRELFLSNASLFVDDAEACEEYEREREQEETEQKAKNKEAEAGTSKSSGDAEQSSKEVNEEEEDDDDDDDDLDMDELDELEASLSKTSIQIREPNDEGSS.

The tract at residues 1–64 (MPPKQQPKAD…AAKKKKEEEK (64 aa)) is disordered. The segment covering 10–23 (DLAKKQKQVEDKTF) has biased composition (basic and acidic residues). The span at 34-46 (VQKYVQSLKQSVQ) shows a compositional bias: polar residues. 2 C3H1-type zinc fingers span residues 88-115 (DPKSILCEFFKAGQCQKGFKCKFSHDLN) and 159-197 (KPTDIVCKYFLDAVEKKQYGWFWSCPNGGKECHYRHALP). 2 coiled-coil regions span residues 205-237 (QMKALLEEESSKKLAVEDEIENERAKLQTATQM) and 283-317 (FVDDAEACEEYEREREQEETEQKAKNKEAEAGTSK). The interval 290 to 371 (CEEYEREREQ…IREPNDEGSS (82 aa)) is disordered. Residues 292–312 (EYEREREQEETEQKAKNKEAE) show a composition bias toward basic and acidic residues. Residues 330-352 (NEEEEDDDDDDDDLDMDELDELE) are compositionally biased toward acidic residues.

This is Zinc finger CCCH domain-containing protein 21 from Arabidopsis thaliana (Mouse-ear cress).